Here is a 436-residue protein sequence, read N- to C-terminus: Adenosylmethionine-8-amino-7-oxononanoate aminotransferase (436 aa).

Tryptophan 66 contributes to the substrate binding site. Residue 126 to 127 (GS) coordinates pyridoxal 5'-phosphate. Tyrosine 159 is a binding site for substrate. Position 256 (aspartate 256) interacts with pyridoxal 5'-phosphate. Substrate-binding residues include lysine 285 and glycine 318. An N6-(pyridoxal phosphate)lysine modification is found at lysine 285. 319–320 (PT) is a binding site for pyridoxal 5'-phosphate. Arginine 402 is a substrate binding site.

This sequence belongs to the class-III pyridoxal-phosphate-dependent aminotransferase family. BioA subfamily. As to quaternary structure, homodimer. Requires pyridoxal 5'-phosphate as cofactor.

The protein localises to the cytoplasm. The enzyme catalyses (8S)-8-amino-7-oxononanoate + S-adenosyl-L-methionine = S-adenosyl-4-methylsulfanyl-2-oxobutanoate + (7R,8S)-7,8-diammoniononanoate. The protein operates within cofactor biosynthesis; biotin biosynthesis; 7,8-diaminononanoate from 8-amino-7-oxononanoate (SAM route): step 1/1. Functionally, catalyzes the transfer of the alpha-amino group from S-adenosyl-L-methionine (SAM) to 7-keto-8-aminopelargonic acid (KAPA) to form 7,8-diaminopelargonic acid (DAPA). It is the only aminotransferase known to utilize SAM as an amino donor. The chain is Adenosylmethionine-8-amino-7-oxononanoate aminotransferase from Mycobacterium leprae (strain TN).